The primary structure comprises 30 residues: Root cyclotide 1 (30 aa).

The segment at residues 1 to 30 (GIPCAESCVWIPCTVTALLGCSCSNKVCYN) is a cross-link (cyclopeptide (Gly-Asn)). Cystine bridges form between C4-C21, C8-C23, and C13-C28.

In terms of processing, this is a cyclic peptide. As to expression, expressed in roots.

Its function is as follows. Probably participates in a plant defense mechanism. The sequence is that of Root cyclotide 1 from Viola hederacea (Australian violet).